We begin with the raw amino-acid sequence, 309 residues long: Methionyl-tRNA formyltransferase (309 aa).

109-112 contributes to the (6S)-5,6,7,8-tetrahydrofolate binding site; the sequence is SLLP.

The protein belongs to the Fmt family.

It catalyses the reaction L-methionyl-tRNA(fMet) + (6R)-10-formyltetrahydrofolate = N-formyl-L-methionyl-tRNA(fMet) + (6S)-5,6,7,8-tetrahydrofolate + H(+). Attaches a formyl group to the free amino group of methionyl-tRNA(fMet). The formyl group appears to play a dual role in the initiator identity of N-formylmethionyl-tRNA by promoting its recognition by IF2 and preventing the misappropriation of this tRNA by the elongation apparatus. This chain is Methionyl-tRNA formyltransferase, found in Clostridium perfringens (strain 13 / Type A).